Consider the following 383-residue polypeptide: Thioredoxin reductase 2 (383 aa).

FAD-binding positions include 66–69 (SGPA), 87–88 (FE), 95–100 (IAPGGQ), asparagine 109, valine 142, cysteine 200, aspartate 345, and 352–354 (RQA). A disulfide bond links cysteine 197 and cysteine 200.

This sequence belongs to the class-II pyridine nucleotide-disulfide oxidoreductase family. As to quaternary structure, homodimer. It depends on FAD as a cofactor.

Its subcellular location is the cytoplasm. The protein localises to the mitochondrion matrix. It carries out the reaction [thioredoxin]-dithiol + NADP(+) = [thioredoxin]-disulfide + NADPH + H(+). Its function is as follows. Possesses thioredoxin-disulfide reductase activity towards thioredoxins O1, O2 and F3. The protein is Thioredoxin reductase 2 (NTR2) of Arabidopsis thaliana (Mouse-ear cress).